Reading from the N-terminus, the 452-residue chain is Plasminogen-binding protein PgbA (452 aa).

The disordered stretch occupies residues 265 to 452; that stretch reads QEAIKEPKKA…RRKALEAGKK (188 aa). 2 stretches are compositionally biased toward basic and acidic residues: residues 284–310 and 317–373; these read LEEK…DERK and KAME…KEPS. Residues 374–391 show a composition bias toward polar residues; sequence DGNNATQQGEKQNAPKEN. Positions 392–452 are enriched in basic and acidic residues; it reads NAQKEENKPN…RRKALEAGKK (61 aa).

The protein localises to the cell surface. In terms of biological role, binds plasminogen, specifically, and in a concentration and lysine-dependent manner. Plasminogen is the precursor of plasmin, a serine protease that cleaves fibrin, fibronectin, laminin and vitronectin. Acquisition of plasminogen/plasmin could enable H.pylori to degrade host components. This is Plasminogen-binding protein PgbA (pgbA) from Helicobacter pylori (strain ATCC 700392 / 26695) (Campylobacter pylori).